The sequence spans 671 residues: DNA ligase (671 aa).

NAD(+) is bound by residues 32-36 (DAEYD), 81-82 (SL), and Glu-113. Residue Lys-115 is the N6-AMP-lysine intermediate of the active site. Arg-136, Glu-173, Lys-290, and Lys-314 together coordinate NAD(+). Zn(2+) is bound by residues Cys-408, Cys-411, Cys-426, and Cys-432. The 79-residue stretch at 593-671 (EIDSPFAGKT…EAEMLRLLGS (79 aa)) folds into the BRCT domain.

This sequence belongs to the NAD-dependent DNA ligase family. LigA subfamily. Mg(2+) is required as a cofactor. The cofactor is Mn(2+).

It catalyses the reaction NAD(+) + (deoxyribonucleotide)n-3'-hydroxyl + 5'-phospho-(deoxyribonucleotide)m = (deoxyribonucleotide)n+m + AMP + beta-nicotinamide D-nucleotide.. Functionally, DNA ligase that catalyzes the formation of phosphodiester linkages between 5'-phosphoryl and 3'-hydroxyl groups in double-stranded DNA using NAD as a coenzyme and as the energy source for the reaction. It is essential for DNA replication and repair of damaged DNA. The chain is DNA ligase from Shigella flexneri serotype 5b (strain 8401).